The sequence spans 202 residues: uncharacterized protein (202 aa).

This sequence belongs to the NAD(P)H dehydrogenase (quinone) family.

This is an uncharacterized protein from Haemophilus influenzae (strain ATCC 51907 / DSM 11121 / KW20 / Rd).